Reading from the N-terminus, the 284-residue chain is Undecaprenyl-diphosphatase (284 aa).

A run of 8 helical transmembrane segments spans residues 7–27 (IILG…TGHL), 44–64 (EMFD…LYFH), 90–110 (LWLK…PLND), 116–136 (FYHF…FIVI), 167–187 (VLSL…ALLV), 197–217 (FTFF…ILHF), 229–249 (FGVL…AIKF), and 259–279 (FTFF…YAMF).

This sequence belongs to the UppP family.

It localises to the cell membrane. It carries out the reaction di-trans,octa-cis-undecaprenyl diphosphate + H2O = di-trans,octa-cis-undecaprenyl phosphate + phosphate + H(+). Catalyzes the dephosphorylation of undecaprenyl diphosphate (UPP). Confers resistance to bacitracin. This is Undecaprenyl-diphosphatase from Lactococcus lactis subsp. lactis (strain IL1403) (Streptococcus lactis).